The primary structure comprises 644 residues: Exoribonuclease 2 (644 aa).

In terms of domain architecture, RNB spans 189–516; that stretch reads RQDLTALNFV…NHRLLKAVIK (328 aa). The S1 motif domain occupies 561–643; it reads NTRFAAEIID…ETRSIIARPA (83 aa).

The protein belongs to the RNR ribonuclease family. RNase II subfamily.

It is found in the cytoplasm. The catalysed reaction is Exonucleolytic cleavage in the 3'- to 5'-direction to yield nucleoside 5'-phosphates.. In terms of biological role, involved in mRNA degradation. Hydrolyzes single-stranded polyribonucleotides processively in the 3' to 5' direction. This is Exoribonuclease 2 from Salmonella gallinarum (strain 287/91 / NCTC 13346).